Here is a 398-residue protein sequence, read N- to C-terminus: Acetate kinase 1 (398 aa).

Asn-10 contributes to the Mg(2+) binding site. Lys-17 is a binding site for ATP. Arg-89 serves as a coordination point for substrate. The active-site Proton donor/acceptor is the Asp-146. ATP is bound by residues 206 to 210, 281 to 283, and 329 to 333; these read HLGNG, DCR, and GIGEN. Glu-384 contacts Mg(2+).

The protein belongs to the acetokinase family. Homodimer. Mg(2+) is required as a cofactor. Requires Mn(2+) as cofactor.

Its subcellular location is the cytoplasm. It catalyses the reaction acetate + ATP = acetyl phosphate + ADP. The protein operates within metabolic intermediate biosynthesis; acetyl-CoA biosynthesis; acetyl-CoA from acetate: step 1/2. Catalyzes the formation of acetyl phosphate from acetate and ATP. Can also catalyze the reverse reaction. The sequence is that of Acetate kinase 1 from Neisseria meningitidis serogroup A / serotype 4A (strain DSM 15465 / Z2491).